We begin with the raw amino-acid sequence, 323 residues long: Fatty acid desaturase 4, chloroplastic (323 aa).

The transit peptide at 1–77 (MAVSLPTKYP…PRPNREKLVV (77 aa)) directs the protein to the chloroplast. Helical transmembrane passes span 101–121 (WVAA…IGGF) and 131–151 (LAGY…HWAI). The short motif at 170 to 173 (QGHH) is the Histidine box-1 element. The helical transmembrane segment at 204–224 (LAFNDPVFHGFVCTFAFCILF) threads the bilayer. Positions 229–233 (HAWAH) match the Histidine box-2 motif. A Histidine box-3 motif is present at residues 258–262 (HAEHH).

This sequence belongs to the fatty acid desaturase CarF family. Fe(2+) is required as a cofactor.

It localises to the plastid. It is found in the chloroplast membrane. It catalyses the reaction a 1-acyl-2-hexadecanoyl-glycerolipid + 2 reduced [2Fe-2S]-[ferredoxin] + O2 + 2 H(+) = a 1-acyl-2-[(3E)-hexadec-3-enoyl]-glycerolipid + 2 oxidized [2Fe-2S]-[ferredoxin] + 2 H2O. Its pathway is lipid metabolism; fatty acid metabolism. Fatty acid desaturase involved in the production of chloroplast-specific phosphatidylglycerol molecular species containing 16:1(3E). Catalyzes the formation of a trans double bond introduced close to the carboxyl group of palmitic acid, which is specifically esterified to the sn-2 glyceryl carbon of phosphatidylglycerol. The sequence is that of Fatty acid desaturase 4, chloroplastic from Arabidopsis thaliana (Mouse-ear cress).